The following is a 146-amino-acid chain: Large ribosomal subunit protein bL21 (146 aa).

Residues 95–104 show a composition bias toward basic residues; sequence PKKKTRRKMG. Residues 95–146 are disordered; the sequence is PKKKTRRKMGHRQELTRVMVKSISISKSTPKSSPKTEATKKSTSSKASKPEN. Residues 115–146 show a composition bias toward low complexity; that stretch reads KSISISKSTPKSSPKTEATKKSTSSKASKPEN.

This sequence belongs to the bacterial ribosomal protein bL21 family. In terms of assembly, part of the 50S ribosomal subunit. Contacts protein L20.

Its function is as follows. This protein binds to 23S rRNA in the presence of protein L20. In Prochlorococcus marinus (strain MIT 9515), this protein is Large ribosomal subunit protein bL21.